We begin with the raw amino-acid sequence, 577 residues long: Arginine--tRNA ligase (577 aa).

Residues 122–132 (PNVAKEMHVGH) carry the 'HIGH' region motif.

It belongs to the class-I aminoacyl-tRNA synthetase family. In terms of assembly, monomer.

The protein localises to the cytoplasm. It carries out the reaction tRNA(Arg) + L-arginine + ATP = L-arginyl-tRNA(Arg) + AMP + diphosphate. The polypeptide is Arginine--tRNA ligase (Shigella dysenteriae serotype 1 (strain Sd197)).